The sequence spans 340 residues: Homeobox protein DBX2 (340 aa).

Positions 185–244 (GILRRAVFSEDQRKALEKMFQKQKYISKTDRKKLAINLGLKESQVKIWFQNRRMKWRNSK) form a DNA-binding region, homeobox. The segment at 283-313 (QQHPSPGWRENSPEPSERLIQGSPGAEALPP) is disordered.

It belongs to the H2.0 homeobox family.

The protein localises to the nucleus. This chain is Homeobox protein DBX2 (DBX2), found in Bos taurus (Bovine).